The following is a 489-amino-acid chain: tRNA(Ile)-lysidine synthase (489 aa).

35–40 is an ATP binding site; that stretch reads SGGLDS.

It belongs to the tRNA(Ile)-lysidine synthase family.

It localises to the cytoplasm. The catalysed reaction is cytidine(34) in tRNA(Ile2) + L-lysine + ATP = lysidine(34) in tRNA(Ile2) + AMP + diphosphate + H(+). Its function is as follows. Ligates lysine onto the cytidine present at position 34 of the AUA codon-specific tRNA(Ile) that contains the anticodon CAU, in an ATP-dependent manner. Cytidine is converted to lysidine, thus changing the amino acid specificity of the tRNA from methionine to isoleucine. The chain is tRNA(Ile)-lysidine synthase from Burkholderia pseudomallei (strain K96243).